Consider the following 305-residue polypeptide: 2-pyrone-4,6-dicarbaxylate hydrolase (305 aa).

Substrate is bound by residues 32–34 (HCH), Tyr-50, Thr-78, Arg-125, Arg-131, Tyr-158, and His-182. Residue Asp-258 is the Proton acceptor of the active site. Asn-263 contacts substrate.

The protein belongs to the metallo-dependent hydrolases superfamily. PDC hydrolase family.

The catalysed reaction is 2-oxo-2H-pyran-4,6-dicarboxylate + H2O = (1E)-4-oxobut-1-ene-1,2,4-tricarboxylate + H(+). With respect to regulation, strongly inhibited by 1 mM Zn(2+), Cu(2+), Mn(2+) and Co(2+) ions. Also inhibited by 5,5'-dithiobis(2-nitrobenzoic acid) (Ellman reagent) in vitro. Its function is as follows. Involved in the degradation of aromatic compounds via the protocatechuate 4,5-cleavage pathway. Catalyzes the hydrolysis of 2-pyrone-4,6-dicarboxylate (PDC) to oxalomesaconate (OMA). Also catalyzes the reverse reaction. This Comamonas testosteroni (Pseudomonas testosteroni) protein is 2-pyrone-4,6-dicarbaxylate hydrolase.